A 468-amino-acid chain; its full sequence is ATP-dependent protease ATPase subunit HslU (468 aa).

Residues Val22 and 64–69 each bind ATP; that span reads GVGKTE. The segment at 166–187 is disordered; that stretch reads FGNNDEEDEEPPTEDIKTKRSE. A compositionally biased stretch (acidic residues) spans 169-178; the sequence is NDEEDEEPPT. The ATP site is built by Asp281, Glu346, and Arg418.

Belongs to the ClpX chaperone family. HslU subfamily. A double ring-shaped homohexamer of HslV is capped on each side by a ring-shaped HslU homohexamer. The assembly of the HslU/HslV complex is dependent on binding of ATP.

It localises to the cytoplasm. ATPase subunit of a proteasome-like degradation complex; this subunit has chaperone activity. The binding of ATP and its subsequent hydrolysis by HslU are essential for unfolding of protein substrates subsequently hydrolyzed by HslV. HslU recognizes the N-terminal part of its protein substrates and unfolds these before they are guided to HslV for hydrolysis. This Staphylococcus carnosus (strain TM300) protein is ATP-dependent protease ATPase subunit HslU.